The chain runs to 398 residues: Putative F-box protein At3g17620 (398 aa).

Residues 1–45 (MMSDLPRDLLEERLSRVPVKSLREARFTCKNWKTLSKKRSFTKKH) form the F-box domain.

The protein is Putative F-box protein At3g17620 of Arabidopsis thaliana (Mouse-ear cress).